Here is an 859-residue protein sequence, read N- to C-terminus: DNA mismatch repair protein MutS (859 aa).

G612–S619 is a binding site for ATP. The tract at residues S797–A822 is disordered.

This sequence belongs to the DNA mismatch repair MutS family.

In terms of biological role, this protein is involved in the repair of mismatches in DNA. It is possible that it carries out the mismatch recognition step. This protein has a weak ATPase activity. The chain is DNA mismatch repair protein MutS from Alcanivorax borkumensis (strain ATCC 700651 / DSM 11573 / NCIMB 13689 / SK2).